A 3120-amino-acid chain; its full sequence is DNA-directed RNA polymerase subunit beta'' (3120 aa).

Residues Cys323, Cys396, Cys403, and Cys406 each contribute to the Zn(2+) site. Residues 595 to 1130 (FIGEGKQNVL…LKTLVLKKWF (536 aa)) are insert-1. The segment at 1796 to 2346 (KGHLVAYARP…NGIIQAKSLL (551 aa)) is insert-2. An insert-3 region spans residues 2422 to 2610 (NSNFLENTHF…PEGEGEKDMT (189 aa)). The interval 2726-2801 (FSKKRWKKSI…KQNQTIILAL (76 aa)) is insert-4. The insert-5 stretch occupies residues 2856 to 2996 (ASKMSEYMFS…LNQLLSNNLD (141 aa)). The interval 2926-2956 (EGIDSSKIPSSNIPEGKVTQNNKRKSTRKNV) is disordered. The span at 2932 to 2946 (KIPSSNIPEGKVTQN) shows a compositional bias: polar residues.

It belongs to the RNA polymerase beta' chain family. RpoC2 subfamily. In terms of assembly, in plastids the minimal PEP RNA polymerase catalytic core is composed of four subunits: alpha, beta, beta', and beta''. When a (nuclear-encoded) sigma factor is associated with the core the holoenzyme is formed, which can initiate transcription. It depends on Zn(2+) as a cofactor.

It is found in the plastid. The protein localises to the chloroplast. The enzyme catalyses RNA(n) + a ribonucleoside 5'-triphosphate = RNA(n+1) + diphosphate. Functionally, DNA-dependent RNA polymerase catalyzes the transcription of DNA into RNA using the four ribonucleoside triphosphates as substrates. In Chlamydomonas reinhardtii (Chlamydomonas smithii), this protein is DNA-directed RNA polymerase subunit beta''.